The following is a 352-amino-acid chain: MVFRIASSPYTHNQRQTSRIMLLVLLAAVPGIAAQLWFFGWGTLVQILLASVSALLAEALVLKLRKQSVAATLKDNSALLTGLLLAVSIPPLAPWWMVVLGTVFAVIIAKQLYGGLGQNPFNPAMIGYVVLLISFPVQMTSWLPPHEIAVNIPGFIDAIQVIFSGHTTSGGDMNTLRLGIDGISQATPLDTFKTSVRAGHSVEQIMQYPIYSGILAGAGWQWVNLAWLAGGVWLLWQKAIRWHIPLSFLVTLALCATLGWLFSPETLASPQIHLLSGATMLGAFFILTDPVTASTTNRGRLIFGALAGLLVWLIRSFGGYPDGVAFAVLLANITVPLIDYYTRPRVYGHRKG.

The next 4 helical transmembrane spans lie at I20 to G40, G42 to L62, I89 to A109, and P123 to L143. The residue at position 187 (T187) is an FMN phosphoryl threonine. A run of 5 helical transmembrane segments spans residues I214–L234, W242–F262, L267–L287, L301–P321, and D322–T342.

This sequence belongs to the NqrB/RnfD family. In terms of assembly, the complex is composed of six subunits: RsxA, RsxB, RsxC, RsxD, RsxE and RsxG. Requires FMN as cofactor.

Its subcellular location is the cell inner membrane. Part of a membrane-bound complex that couples electron transfer with translocation of ions across the membrane. Required to maintain the reduced state of SoxR. The polypeptide is Ion-translocating oxidoreductase complex subunit D (Escherichia coli O17:K52:H18 (strain UMN026 / ExPEC)).